The primary structure comprises 433 residues: Leucine-rich repeat extensin-like protein 7 (433 aa).

An N-terminal signal peptide occupies residues 1-21; it reads MRIYQPTLLIFTTVVLLSISA. Asn71 is a glycosylation site (N-linked (GlcNAc...) asparagine). LRR repeat units lie at residues 98 to 122, 123 to 145, 146 to 170, 171 to 194, 196 to 217, 219 to 239, 241 to 265, 266 to 289, and 290 to 313; these read VKTV…LGLL, TDIA…GFSQ, LSLL…VIGL, PKLK…LFDK, LDAL…MGNS, VSVL…SFGK, GKTL…MGLL, QNVT…MGQM, and ENLE…LCSL. Asn267 carries N-linked (GlcNAc...) asparagine glycosylation. Asn340 carries N-linked (GlcNAc...) asparagine glycosylation. Positions 380 to 433 are disordered; that stretch reads FSPPPSQISPSSQPLAPAPSPTSPPLSTPPPARPCPPVYSPPPPPPLSLAPSMN. Positions 381 to 433 are contains the Ser-Pro(4) repeats; it reads SPPPSQISPSSQPLAPAPSPTSPPLSTPPPARPCPPVYSPPPPPPLSLAPSMN. Residues 395 to 427 show a composition bias toward pro residues; sequence APAPSPTSPPLSTPPPARPCPPVYSPPPPPPLS.

Hydroxylated on proline residues in the S-P-P-P-P repeat. Post-translationally, O-glycosylated on hydroxyprolines. Expressed in flowers and pollen.

It is found in the secreted. Its subcellular location is the cell wall. Functionally, modulates cell morphogenesis by regulating cell wall formation and assembly, and/or growth polarization. The chain is Leucine-rich repeat extensin-like protein 7 (LRX7) from Arabidopsis thaliana (Mouse-ear cress).